Reading from the N-terminus, the 200-residue chain is Recombination protein RecR (200 aa).

The C4-type zinc finger occupies C59 to C74. In terms of domain architecture, Toprim spans S82–P177.

It belongs to the RecR family.

In terms of biological role, may play a role in DNA repair. It seems to be involved in an RecBC-independent recombinational process of DNA repair. It may act with RecF and RecO. The polypeptide is Recombination protein RecR (Bifidobacterium longum (strain DJO10A)).